The primary structure comprises 498 residues: Aminotransferase swnA (498 aa).

The protein belongs to the class-I pyridoxal-phosphate-dependent aminotransferase family. Requires pyridoxal 5'-phosphate as cofactor.

It participates in mycotoxin biosynthesis. In terms of biological role, aminotransferase; part of the gene cluster that mediates the biosynthesis of swainsonine (SW), a cytotoxic fungal alkaloid and a potential cancer therapy drug. Swainsonine production occurs via a multibranched pathway and is dispensable for fungal colonization of plants and infection of insect hosts. The first step of swainsonine biosynthesis is the production of the precursor pipecolic acid (PA) via conversion of L-lysine (Lys) to 1-piperideine-6-carboxylate (P6C) by the aminotransferase swnA, the latter being further reduced to PA by the reductase swnR. PA can be converted from lysine by both the SW biosynthetic cluster and the unclustered genes such as lysine cyclodeaminase. The PKS-NRPS hybrid synthetase swnK uptakes and condensates PA and malonyl-CoA with and without skipping of the ketoreductase (KR) domain in order to produce 3 intermediates, 1-oxoindolizidine, (1S)-1-hydroxyindolizin, and (1R)-1-hydroxyindolizine; with the transisomer (1S)-1-hydroxyindolizin being predominant. The terminal thioester reductase (TE) domain of swnK is involved in reduction of the thioester bond to release the intermediate aldehydes. The oxidoreductase swnN could contribute to the reduction of 1-oxoindolizidine to (1S)-1-hydroxyindolizin and (1R)-1-hydroxyindolizine, contributing to the major route of SW production. The dioxygenase swnH2 would be responsible for the oxidization of (1R)-1-hydroxyindolizine into (1R,2S)-1,2-dihydroxyindolizine and of (1S)-1-hydroxyindolizin to yield both (1R,2S)-1,2-dihydroxyindolizine and (1S,2S)-1,2-dihydroxyindolizine. The dioxygenase swnH1 then performs the conversion of the 1,2-dihydroxyindolizine epimers to SW. The sequence is that of Aminotransferase swnA from Metarhizium robertsii (strain ARSEF 23 / ATCC MYA-3075) (Metarhizium anisopliae (strain ARSEF 23)).